The sequence spans 567 residues: Eukaryotic translation initiation factor 3 subunit D (567 aa).

2 disordered regions span residues 12–34 and 122–160; these read PVKSAWGPPETEQIGGDIPYAPF and GQNVQRGGRGGRYGSSGGRGAGDTVVSRSSGAGGARGRR. Positions 128–142 are enriched in gly residues; sequence GGRGGRYGSSGGRGA. The segment at 300–314 is RNA gate; that stretch reads PFDYLTVNENAYDSP.

It belongs to the eIF-3 subunit D family. As to quaternary structure, component of the eukaryotic translation initiation factor 3 (eIF-3) complex. The eIF-3 complex appears to include tif32/eif3a, SPAC25G10.08/eif3b, tif33/eif3c, SPBC4C3.07/eif3f, tif35/eif3g and sum1/eif3i. This set of common subunits may also associate exclusively with either moe1/eif3d and int6/eif3e, or with SPAC821.05/eif3h and SPAC1751.03/eif3m. The eIF-3 complex may also include SPAC3A12.13c/eif3j.

It is found in the cytoplasm. Functionally, mRNA cap-binding component of the eukaryotic translation initiation factor 3 (eIF-3) complex, which is involved in protein synthesis of a specialized repertoire of mRNAs and, together with other initiation factors, stimulates binding of mRNA and methionyl-tRNAi to the 40S ribosome. The eIF-3 complex specifically targets and initiates translation of a subset of mRNAs involved in cell proliferation. In the eIF-3 complex, eif3d specifically recognizes and binds the 7-methylguanosine cap of a subset of mRNAs. This is Eukaryotic translation initiation factor 3 subunit D (moe1) from Schizosaccharomyces pombe (strain 972 / ATCC 24843) (Fission yeast).